Here is a 195-residue protein sequence, read N- to C-terminus: NADH-quinone oxidoreductase subunit B (195 aa).

[4Fe-4S] cluster-binding residues include cysteine 74, cysteine 75, cysteine 139, and cysteine 169.

It belongs to the complex I 20 kDa subunit family. As to quaternary structure, NDH-1 is composed of 14 different subunits. Subunits NuoB, C, D, E, F, and G constitute the peripheral sector of the complex. The cofactor is [4Fe-4S] cluster.

It is found in the cell inner membrane. It carries out the reaction a quinone + NADH + 5 H(+)(in) = a quinol + NAD(+) + 4 H(+)(out). Its function is as follows. NDH-1 shuttles electrons from NADH, via FMN and iron-sulfur (Fe-S) centers, to quinones in the respiratory chain. The immediate electron acceptor for the enzyme in this species is believed to be ubiquinone. Couples the redox reaction to proton translocation (for every two electrons transferred, four hydrogen ions are translocated across the cytoplasmic membrane), and thus conserves the redox energy in a proton gradient. The protein is NADH-quinone oxidoreductase subunit B of Methylorubrum extorquens (strain PA1) (Methylobacterium extorquens).